The following is a 196-amino-acid chain: UDP-N-acetylglucosamine transferase subunit ALG13 (196 aa).

The protein belongs to the glycosyltransferase 28 family. As to quaternary structure, heterodimer with ALG14 to form a functional enzyme.

It is found in the endoplasmic reticulum. The catalysed reaction is an N-acetyl-alpha-D-glucosaminyl-diphospho-di-trans,poly-cis-dolichol + UDP-N-acetyl-alpha-D-glucosamine = an N,N'-diacetylchitobiosyl-diphospho-di-trans,poly-cis-dolichol + UDP + H(+). Functionally, involved in protein N-glycosylation. Essential for the second step of the dolichol-linked oligosaccharide pathway. The protein is UDP-N-acetylglucosamine transferase subunit ALG13 (ALG13) of Yarrowia lipolytica (strain CLIB 122 / E 150) (Yeast).